Consider the following 257-residue polypeptide: MKKNTLLKVGLCVSLLGTTQFVSTISSVQASQKVEQIVIKNETGTISISQLNKNVWVHTELGYFNGEAVPSNGLVLNTSKGLVLVDSSWDNKLTKELIEMVEKKFQKRVTDVIITHAHADRIGGITALKERGIKAHSTALTAELAKKSGYEEPLGDLQTVTNLKFGNTKVETFYPGKGHTEDNIVVWLPQYQILAGGCLVKSAEAKNLGNVADAYVNEWSTSIENMLKRYRNINLVVPGHGKVGDKGLLLHTLDLLK.

An N-terminal signal peptide occupies residues 1–30 (MKKNTLLKVGLCVSLLGTTQFVSTISSVQA). Zn(2+)-binding residues include histidine 116, histidine 118, aspartate 120, histidine 179, and cysteine 198. Substrate contacts are provided by lysine 201 and asparagine 210. Histidine 240 contacts Zn(2+).

The protein belongs to the metallo-beta-lactamase superfamily. Class-B beta-lactamase family. Monomer. Zn(2+) serves as cofactor.

Its subcellular location is the periplasm. It catalyses the reaction a beta-lactam + H2O = a substituted beta-amino acid. In terms of biological role, confers resistance to the different beta-lactams antibiotics (penicillin, cephalosporin and carbapenem) via the hydrolysis of the beta-lactam ring. The sequence is that of Metallo-beta-lactamase type 2 from Bacillus sp. (strain 170).